We begin with the raw amino-acid sequence, 166 residues long: NAD(P)H-quinone oxidoreductase subunit I, chloroplastic (166 aa).

2 consecutive 4Fe-4S ferredoxin-type domains span residues 55–84 (GRIH…VDWK) and 95–124 (LNYS…MTEE). 8 residues coordinate [4Fe-4S] cluster: Cys64, Cys67, Cys70, Cys74, Cys104, Cys107, Cys110, and Cys114.

It belongs to the complex I 23 kDa subunit family. As to quaternary structure, NDH is composed of at least 16 different subunits, 5 of which are encoded in the nucleus. [4Fe-4S] cluster is required as a cofactor.

It is found in the plastid. Its subcellular location is the chloroplast thylakoid membrane. The enzyme catalyses a plastoquinone + NADH + (n+1) H(+)(in) = a plastoquinol + NAD(+) + n H(+)(out). It catalyses the reaction a plastoquinone + NADPH + (n+1) H(+)(in) = a plastoquinol + NADP(+) + n H(+)(out). Its function is as follows. NDH shuttles electrons from NAD(P)H:plastoquinone, via FMN and iron-sulfur (Fe-S) centers, to quinones in the photosynthetic chain and possibly in a chloroplast respiratory chain. The immediate electron acceptor for the enzyme in this species is believed to be plastoquinone. Couples the redox reaction to proton translocation, and thus conserves the redox energy in a proton gradient. In Melampodium leucanthum (Black foot daisy), this protein is NAD(P)H-quinone oxidoreductase subunit I, chloroplastic.